The chain runs to 482 residues: MLKARKVHFIGVGGYGMSALAMVLKQRGTAVSGSDVAASARTQRLAEAGVEVHIGAHDAAHIEGADVVVYSTQVPEDNPELAAARARGLRVLHRSELLAEFLNGRSIAVAGTHGKTTTSSMVACLLEKAGLDPTILLGGDLEVIGGTGKAGRGDWVVAEADESDRSFLRYHPRVAVVTNVEPEHLEFWEGSFARIQEGFRQFLRQVQPGGLAALCADDPTLRSIGQELRNQPGVVHVVFYGTHPEAEWRAENIRPWEKGIVYDCVRDGRLLGEVRLPIPGRHNALNSLGALVAGDYAGLSFRQMQETLLSFGNARRRFEVWADVDGIRVVDDYAHHPTEIRATLAAAREQAGRRVVAVFQPQRYSRTHWLMDEFATAFQDADVLVLTRIYSPPGERPIPGVSAEALARRIQANTGRPVAVISDQEEILRFLLAEVRPGDTVITMGAGDIWKVARALAQALQSRAVTRTASSGSGRPAPGSGR.

Residue 111-117 (GTHGKTT) participates in ATP binding.

It belongs to the MurCDEF family.

Its subcellular location is the cytoplasm. The catalysed reaction is UDP-N-acetyl-alpha-D-muramate + L-alanine + ATP = UDP-N-acetyl-alpha-D-muramoyl-L-alanine + ADP + phosphate + H(+). It functions in the pathway cell wall biogenesis; peptidoglycan biosynthesis. In terms of biological role, cell wall formation. The chain is UDP-N-acetylmuramate--L-alanine ligase from Symbiobacterium thermophilum (strain DSM 24528 / JCM 14929 / IAM 14863 / T).